We begin with the raw amino-acid sequence, 273 residues long: Glutamate 5-kinase (273 aa).

Position 15 (K15) interacts with ATP. The substrate site is built by S55, D142, and N158. ATP-binding positions include 178 to 179 (SD) and 220 to 226 (TGGMLSK).

The protein belongs to the glutamate 5-kinase family.

It localises to the cytoplasm. The catalysed reaction is L-glutamate + ATP = L-glutamyl 5-phosphate + ADP. The protein operates within amino-acid biosynthesis; L-proline biosynthesis; L-glutamate 5-semialdehyde from L-glutamate: step 1/2. Its function is as follows. Catalyzes the transfer of a phosphate group to glutamate to form L-glutamate 5-phosphate. The polypeptide is Glutamate 5-kinase (Streptococcus pyogenes serotype M49 (strain NZ131)).